Consider the following 376-residue polypeptide: Mitogen-activated protein kinase 6 (376 aa).

The 287-residue stretch at 43–329 folds into the Protein kinase domain; sequence APPIRPIGRG…VDEALHHPYL (287 aa). ATP is bound by residues 49–57 and Lys72; that span reads IGRGAYGIV. The active-site Proton acceptor is Asp169. Residue Thr201 is modified to Phosphothreonine. A TXY motif is present at residues 201-203; it reads TEY. Tyr203 is modified (phosphotyrosine).

Belongs to the protein kinase superfamily. CMGC Ser/Thr protein kinase family. MAP kinase subfamily. In terms of processing, dually phosphorylated on Thr-201 and Tyr-203, which activates the enzyme.

It catalyses the reaction L-seryl-[protein] + ATP = O-phospho-L-seryl-[protein] + ADP + H(+). It carries out the reaction L-threonyl-[protein] + ATP = O-phospho-L-threonyl-[protein] + ADP + H(+). Activated by threonine and tyrosine phosphorylation. The protein is Mitogen-activated protein kinase 6 (MPK6) of Oryza sativa subsp. japonica (Rice).